The chain runs to 448 residues: Phosphoglucosamine mutase (448 aa).

Ser100 functions as the Phosphoserine intermediate in the catalytic mechanism. The Mg(2+) site is built by Ser100, Asp240, Asp242, and Asp244. Phosphoserine is present on Ser100.

The protein belongs to the phosphohexose mutase family. Mg(2+) is required as a cofactor. In terms of processing, activated by phosphorylation.

It catalyses the reaction alpha-D-glucosamine 1-phosphate = D-glucosamine 6-phosphate. Functionally, catalyzes the conversion of glucosamine-6-phosphate to glucosamine-1-phosphate. This is Phosphoglucosamine mutase from Geobacillus thermodenitrificans (strain NG80-2).